Consider the following 738-residue polypeptide: Putative RNA-binding protein EEED8.10 (738 aa).

Positions 112 to 201 constitute an RRM domain; sequence RKIVVSNISA…QVMVVSAYVS (90 aa). The interval 211 to 237 is disordered; that stretch reads LSDDVGSREDTPLSRASSTQSLASGSE. Residues 224–237 show a composition bias toward polar residues; that stretch reads SRASSTQSLASGSE. The F-box domain maps to 239–297; that stretch reads SFNLGNVPDKILRRVISFLPIHETIRLERVNKKFMEESIKSWELVNKIALARETVFNKQ.

This is Putative RNA-binding protein EEED8.10 from Caenorhabditis elegans.